Here is a 611-residue protein sequence, read N- to C-terminus: tRNA uridine 5-carboxymethylaminomethyl modification enzyme MnmG (611 aa).

14-19 (GAGHAG) contacts FAD. 274 to 288 (GPRYCPSIEDKIVKF) lines the NAD(+) pocket.

Belongs to the MnmG family. In terms of assembly, homodimer. Heterotetramer of two MnmE and two MnmG subunits. The cofactor is FAD.

It is found in the cytoplasm. NAD-binding protein involved in the addition of a carboxymethylaminomethyl (cmnm) group at the wobble position (U34) of certain tRNAs, forming tRNA-cmnm(5)s(2)U34. The protein is tRNA uridine 5-carboxymethylaminomethyl modification enzyme MnmG of Chlamydia caviae (strain ATCC VR-813 / DSM 19441 / 03DC25 / GPIC) (Chlamydophila caviae).